The primary structure comprises 145 residues: Succinate dehydrogenase assembly factor 2, mitochondrial (145 aa).

This sequence belongs to the SDHAF2 family. As to quaternary structure, interacts with the flavoprotein subunit within the SDH catalytic dimer.

The protein localises to the mitochondrion matrix. Its function is as follows. Plays an essential role in the assembly of succinate dehydrogenase (SDH), an enzyme complex (also referred to as respiratory complex II) that is a component of both the tricarboxylic acid (TCA) cycle and the mitochondrial electron transport chain, and which couples the oxidation of succinate to fumarate with the reduction of ubiquinone (coenzyme Q) to ubiquinol. Required for flavinylation (covalent attachment of FAD) of the flavoprotein subunit of the SDH catalytic dimer. This Yarrowia lipolytica (strain CLIB 122 / E 150) (Yeast) protein is Succinate dehydrogenase assembly factor 2, mitochondrial.